A 1016-amino-acid chain; its full sequence is MAIHPSKGTGGSKQSNSGARFRQRKISVKQPLTIYKQSDLPTLNASNDLEPSQIHHLNSNANQQQRDIHAIETGVDKNEEDEVHLQQVINAAQKVLLGSQNEDGDKKKDDSDKKTDASVYIPTPDASRIWTDASKYYNDKSFREPETYIKFSATVEDTVGVEFNMDEIDEEFLKNKLWKNYPKVKSPKVKSEKLDDTNKENDNARKCSEVEFEIICDKLEKIIEEKQPFLSMDPSNILSFKELSAYIIEEFNNSNKDKPYVQLGSNLKYISTTALKEKLSKELSFEPFVTLFDKSLLDQTSTNIVRPIPKLLELFGEPVYEHWKYRKIERKGKQIHPALKFEDPSANEKDNDNDPYICFRRREFRQARKTRRADTLGAERIRLLQKSMHRARDLVMSVCRRELIKLENWETDHAIFKLRSDAKNLKRVVGVKGDDFLFYPHKRKKIIKVKEEDEDKESSKIKRDKRSRFDSSREGSATSMPGSATIGTNAINKDRLANGQVHHTQEASSSSQPYVKLPPSKIPDMGLVTVSLVLKEKNETIKRAVLEKLRKRKEQDKDFINVTDDPYQPFFNIATNTKFKNNELKHIPYSSIAATSFHEINTTNYISEKLKNLLEEGKKPLPGTKTFRGSNGELIPSKPFPHLSALIQDRIDNSQFNSVSYIAQLLSNIENNNFSAYNNGYGQQQQHQHQETNRDKTKLSDPIFRLRKRVGRFNRNFVDRRGLMKRPNDVIDDFLKFDDEGVNDDCDQMDVDSESISKNNVPNVYDSRVDEIKRLDSRWQFDNDLTEYDKGLQSPFSLDPSRLNCISDDTQSIRFGSMLLSKSYDLLRDSVHQRQQALVQQARMRTLQQQQRNNKQQAAGQSSGSSSASLGSNTNSNSSISGQADQGQTNLTNSGITRQGGANVNGSQTSTTNNTRSSVSGGSMNPKLPTQSSQRSNTNSPLLASQPQGYSQQQKFNKIPPTSQSQSQSPTHAAGQLQTSKMYNKHGSNITPSNLKGPKFTPANNNQIGGSLPNRK.

Disordered stretches follow at residues 1-50 (MAIH…NDLE), 96-119 (LLGS…DASV), 450-488 (KEED…TIGT), 499-518 (GQVH…VKLP), and 842-1016 (ARMR…PNRK). Over residues 35–50 (YKQSDLPTLNASNDLE) the composition is skewed to polar residues. Basic and acidic residues-rich tracts occupy residues 103–116 (DGDK…KKTD) and 457–473 (ESSK…DSSR). A compositionally biased stretch (polar residues) spans 475 to 488 (GSATSMPGSATIGT). Positions 842–883 (ARMRTLQQQQRNNKQQAAGQSSGSSSASLGSNTNSNSSISGQ) are enriched in low complexity. Residues 884 to 902 (ADQGQTNLTNSGITRQGGA) show a composition bias toward polar residues. Residues 904 to 923 (VNGSQTSTTNNTRSSVSGGS) are compositionally biased toward low complexity. The span at 928-956 (LPTQSSQRSNTNSPLLASQPQGYSQQQKF) shows a compositional bias: polar residues. A compositionally biased stretch (low complexity) spans 960–971 (PPTSQSQSQSPT). Polar residues predominate over residues 976–994 (QLQTSKMYNKHGSNITPSN).

This sequence belongs to the enhancer of polycomb family. In terms of assembly, component of the NuA4 histone acetyltransferase complex.

It localises to the nucleus. Its function is as follows. Component of the NuA4 histone acetyltransferase complex which is involved in transcriptional activation of selected genes principally by acetylation of nucleosomal histone H4 and H2A. The NuA4 complex is also involved in DNA repair. Involved in gene silencing by neighboring heterochromatin, blockage of the silencing spreading along the chromosome, and required for cell cycle progression through G2/M. The protein is Enhancer of polycomb-like protein 1 (EPL1) of Debaryomyces hansenii (strain ATCC 36239 / CBS 767 / BCRC 21394 / JCM 1990 / NBRC 0083 / IGC 2968) (Yeast).